The primary structure comprises 385 residues: tRNA-specific 2-thiouridylase MnmA (385 aa).

Residues 27-34 (AMSGGVDS) and Leu-53 contribute to the ATP site. Cys-121 serves as the catalytic Nucleophile. An intrachain disulfide couples Cys-121 to Cys-217. Gly-145 lines the ATP pocket. An interaction with tRNA region spans residues 167 to 169 (KDQ). Cys-217 serves as the catalytic Cysteine persulfide intermediate.

It belongs to the MnmA/TRMU family.

It is found in the cytoplasm. It carries out the reaction S-sulfanyl-L-cysteinyl-[protein] + uridine(34) in tRNA + AH2 + ATP = 2-thiouridine(34) in tRNA + L-cysteinyl-[protein] + A + AMP + diphosphate + H(+). In terms of biological role, catalyzes the 2-thiolation of uridine at the wobble position (U34) of tRNA, leading to the formation of s(2)U34. In Sorangium cellulosum (strain So ce56) (Polyangium cellulosum (strain So ce56)), this protein is tRNA-specific 2-thiouridylase MnmA.